A 2227-amino-acid chain; its full sequence is Genome polyprotein (2227 aa).

2 short sequence motifs ((L)YPX(n)L motif) span residues 167-171 (YPHGL) and 200-205 (YPVWEL). The interval 766 to 836 (MMSRIAAGDL…PRKMKGLFSQ (71 aa)) is involved in P1-2A pentamerization. A helical membrane pass occupies residues 1011-1031 (TVEIINTVLCFVKSGILLYVI). The interval 1043–1070 (IGLLRVMNYADIGCSVISCGKVFSKMLE) is membrane-penetrating ability. Residues 1204–1366 (HQKLKNLGSI…SFFKNPHNDM (163 aa)) enclose the SF3 helicase domain. Residue 1230 to 1237 (GKRGGGKS) coordinates ATP. A helical transmembrane segment spans residues 1462-1482 (WVAVGAAVGILGVLVGGWFVY). Position 1499 is an O-(5'-phospho-RNA)-tyrosine (tyrosine 1499). The region spanning 1514-1728 (DPVESQSTLE…VAKLVTQEMF (215 aa)) is the Peptidase C3 domain. Catalysis depends on for protease 3C activity residues histidine 1563, aspartate 1603, and cysteine 1691. Residues 1976–2097 (DVGLDLDFSA…VFSRDVQIDN (122 aa)) form the RdRp catalytic domain.

The protein belongs to the picornaviridae polyprotein family. In terms of assembly, homodimer. Homomultimer; probably interacts with membranes in a multimeric form. Seems to assemble into amyloid-like fibers. Interacts with host ACBD3. As to quaternary structure, homodimer. Monomer. Interacts with protein 3CD. In terms of assembly, interacts with protein 3AB. Interacts with human MAVS. As to quaternary structure, homodimer; disulfide-linked. In terms of assembly, homopentamer. Homooligomer. Interacts with capsid protein VP2. Interacts with capsid protein VP3. As to quaternary structure, interacts with capsid protein VP1. Interacts with capsid protein VP3. In terms of assembly, interacts with capsid protein VP1. Interacts with capsid protein VP2. Specific enzymatic cleavages by viral protease in vivo yield a variety of precursors and mature proteins. Polyprotein processing intermediates are produced, such as P1-2A which is a functional precursor of the structural proteins, VP0 which is a VP4-VP2 precursor, VP1-2A precursor, 3ABC precursor which is a stable and catalytically active precursor of 3A, 3B and 3C proteins, 3AB and 3CD precursors. The assembly signal 2A is removed from VP1-2A by a host protease, possibly host Cathepsin L. This cleavage occurs over a region of 3 amino-acids probably generating VP1 proteins with heterogeneous C-termini. Post-translationally, during virion maturation, immature virions are rendered infectious following cleavage of VP0 into VP4 and VP2. This maturation seems to be an autocatalytic event triggered by the presence of RNA in the capsid and is followed by a conformational change of the particle. In terms of processing, the assembly signal 2A is removed from VP1-2A by a host protease, possibly host Cathepsin L in naked virions. This cleavage does not occur in enveloped virions. This cleavage occurs over a region of 3 amino-acids probably generating VP1 proteins with heterogeneous C-termini. VPg is uridylylated prior to priming replication into VPg-pUpU. Post-translationally, unlike other picornaviruses, does not seem to be myristoylated.

The protein resides in the virion. The protein localises to the host endosome. It is found in the host multivesicular body. Its subcellular location is the host membrane. It localises to the host mitochondrion outer membrane. The protein resides in the host cytoplasm. The protein localises to the host cytoplasmic vesicle membrane. It carries out the reaction RNA(n) + a ribonucleoside 5'-triphosphate = RNA(n+1) + diphosphate. The catalysed reaction is a ribonucleoside 5'-triphosphate + H2O = a ribonucleoside 5'-diphosphate + phosphate + H(+). The enzyme catalyses Selective cleavage of Gln-|-Gly bond in the poliovirus polyprotein. In other picornavirus reactions Glu may be substituted for Gln, and Ser or Thr for Gly.. Functionally, capsid proteins VP1, VP2, and VP3 form a closed capsid enclosing the viral positive strand RNA genome. All these proteins contain a beta-sheet structure called beta-barrel jelly roll. Together they form an icosahedral capsid (T=3) composed of 60 copies of each VP1, VP2, and VP3, with a diameter of approximately 300 Angstroms. VP1 is situated at the 12 fivefold axes, whereas VP2 and VP3 are located at the quasi-sixfold axes. The naked capsid interacts with the host receptor HAVCR1 to provide virion attachment to and probably entry into the target cell. In terms of biological role, VP0 precursor is a component of the immature procapsids. Its function is as follows. Plays a role in the assembly of the 12 pentamers into an icosahedral structure. Has not been detected in mature virions, supposedly owing to its small size. Precursor component of immature procapsids that corresponds to an extended form of the structural protein VP1. After maturation, possibly by the host Cathepsin L, the assembly signal 2A is cleaved to give rise to the mature VP1 protein. Functionally, functions as a viroporin. Affects membrane integrity and causes an increase in membrane permeability. Involved in host intracellular membrane rearrangements probably to give rise to the viral factories. Does not disrupt calcium homeostasis or glycoprotein trafficking. Antagonizes the innate immune response of the host by suppressing IFN-beta synthesis, which it achieves by interfering with the RIG-I/IFIH1 pathway. In terms of biological role, affects membrane integrity and causes an increase in membrane permeability. Its function is as follows. Associates with and induces structural rearrangements of intracellular membranes. Displays RNA-binding activity. The precursor 3ABC is targeted to the mitochondrial membrane where protease 3C activity cleaves and inhibits the host antiviral protein MAVS, thereby disrupting activation of IRF3 through the IFIH1/MDA5 pathway. In vivo, the protease activity of 3ABC precursor is more efficient in cleaving the 2BC precursor than that of protein 3C. The 3ABC precursor may therefore play a role in the proteolytic processing of the polyprotein. Functionally, interacts with the 3CD precursor and with RNA structures found at both the 5'- and 3'-termini of the viral genome. Since the 3AB precursor contains the hydrophobic domain 3A, it probably anchors the whole viral replicase complex to intracellular membranes on which viral RNA synthesis occurs. In terms of biological role, may serve as membrane anchor to the 3AB and 3ABC precursors via its hydrophobic domain. May interact with RNA. Its function is as follows. Acts as a primer for viral RNA replication and remains covalently bound to viral genomic RNA. VPg is uridylylated prior to priming replication into VPg-pUpU. The VPg-pUpU is then used as primer on the genomic RNA poly(A) by the RNA-dependent RNA polymerase to replicate the viral genome. Cysteine protease that generates mature viral proteins from the precursor polyprotein. In addition to its proteolytic activity, it binds to viral RNA, and thus influences viral genome replication. RNA and substrate bind cooperatively to the protease. Cleaves IKBKG/NEMO to impair innate immune signaling. Cleaves host PABPC1 which may participate in the switch of viral translation to RNA synthesis. Functionally, interacts with the 3AB precursor and with RNA structures found at both the 5'- and 3'-termini of the viral genome. Disrupts TLR3 signaling by degrading the host adapter protein TICAM1/TRIF. In terms of biological role, RNA-directed RNA polymerase 3D-POL replicates genomic and antigenomic RNA by recognizing replications specific signals. The chain is Genome polyprotein from Human hepatitis A virus genotype IB (isolate HM175) (HHAV).